Here is a 244-residue protein sequence, read N- to C-terminus: Probable transcriptional regulatory protein CBU_1566 (244 aa).

Belongs to the TACO1 family.

The protein localises to the cytoplasm. The polypeptide is Probable transcriptional regulatory protein CBU_1566 (Coxiella burnetii (strain RSA 493 / Nine Mile phase I)).